Reading from the N-terminus, the 209-residue chain is Large ribosomal subunit protein uL3 (209 aa).

Q150 carries the post-translational modification N5-methylglutamine.

The protein belongs to the universal ribosomal protein uL3 family. Part of the 50S ribosomal subunit. Forms a cluster with proteins L14 and L19. Post-translationally, methylated by PrmB.

In terms of biological role, one of the primary rRNA binding proteins, it binds directly near the 3'-end of the 23S rRNA, where it nucleates assembly of the 50S subunit. The polypeptide is Large ribosomal subunit protein uL3 (Klebsiella pneumoniae (strain 342)).